The chain runs to 356 residues: Glycerol-1-phosphate dehydrogenase [NAD(P)+] (356 aa).

Residues 103–107 (GRSID) and 125–128 (TAAS) contribute to the NAD(+) site. Position 130 (Asp130) interacts with substrate. Ser134 lines the NAD(+) pocket. Position 177 (Asp177) interacts with substrate. Positions 177 and 257 each coordinate Zn(2+). A substrate-binding site is contributed by His261. Position 273 (His273) interacts with Zn(2+).

The protein belongs to the glycerol-1-phosphate dehydrogenase family. Zn(2+) is required as a cofactor.

The protein localises to the cytoplasm. The enzyme catalyses sn-glycerol 1-phosphate + NAD(+) = dihydroxyacetone phosphate + NADH + H(+). It carries out the reaction sn-glycerol 1-phosphate + NADP(+) = dihydroxyacetone phosphate + NADPH + H(+). It participates in membrane lipid metabolism; glycerophospholipid metabolism. In terms of biological role, catalyzes the NAD(P)H-dependent reduction of dihydroxyacetonephosphate (DHAP or glycerone phosphate) to glycerol 1-phosphate (G1P). The G1P thus generated is used as the glycerophosphate backbone of phospholipids in the cellular membranes of Archaea. The protein is Glycerol-1-phosphate dehydrogenase [NAD(P)+] of Methanosarcina acetivorans (strain ATCC 35395 / DSM 2834 / JCM 12185 / C2A).